We begin with the raw amino-acid sequence, 332 residues long: Ribosomal RNA small subunit methyltransferase H (332 aa).

S-adenosyl-L-methionine contacts are provided by residues 38-40 (GGY), aspartate 56, phenylalanine 83, aspartate 104, and glutamine 111. The tract at residues 309–332 (TETPFSEDISRPDTHIPRSRRQSA) is disordered.

This sequence belongs to the methyltransferase superfamily. RsmH family.

Its subcellular location is the cytoplasm. The catalysed reaction is cytidine(1402) in 16S rRNA + S-adenosyl-L-methionine = N(4)-methylcytidine(1402) in 16S rRNA + S-adenosyl-L-homocysteine + H(+). Its function is as follows. Specifically methylates the N4 position of cytidine in position 1402 (C1402) of 16S rRNA. The sequence is that of Ribosomal RNA small subunit methyltransferase H from Zymomonas mobilis subsp. mobilis (strain ATCC 31821 / ZM4 / CP4).